We begin with the raw amino-acid sequence, 770 residues long: Protein PAT1 homolog 1 (770 aa).

Residues 1–42 (MFRYESLEDCPLDEDEDAFQGLGEEDEEIDQFNDDTFGSGAV) form a disordered region. A region A; interaction with DDX6/RCK region spans residues 1-84 (MFRYESLEDC…EMDLLGDHEE (84 aa)). Residues 1-397 (MFRYESLEDC…HQSSHQDHLR (397 aa)) are involved in nuclear foci localization. A compositionally biased stretch (acidic residues) spans 7–33 (LEDCPLDEDEDAFQGLGEEDEEIDQFN). Positions 85 to 388 (NLAERLSKMV…LNGTGDRGGH (304 aa)) are region N; interaction with decapping machinery. The short motif at 86–95 (LAERLSKMVI) is the Nuclear export signal element. The segment at 155–195 (PQRPLQGPEDDRDLSERALPRRSTSPIIGSPPVRAVPIGTP) is disordered. Residue Ser177 is modified to Phosphoserine. The residue at position 178 (Thr178) is a Phosphothreonine. 2 positions are modified to phosphoserine: Ser179 and Ser184. Thr194 is subject to Phosphothreonine. 3 positions are modified to asymmetric dimethylarginine: Arg217, Arg223, and Arg263. The segment at 223–397 (RYPAPYGERI…HQSSHQDHLR (175 aa)) is involved in RNA-binding. Phosphoserine is present on Ser278. Arg284 carries the post-translational modification Asymmetric dimethylarginine. Disordered stretches follow at residues 319-340 (FSAP…GPHL) and 376-396 (HRNL…QDHL). The span at 321-337 (APPPATPPPQQHPPGPG) shows a compositional bias: pro residues. Arg385 is subject to Omega-N-methylarginine. Positions 385 to 396 (RGGHQSSHQDHL) are enriched in basic and acidic residues. Residues 389 to 448 (QSSHQDHLRKDPYANLMLQREKDWVSKIQMMQLQSTDPYLDDFYYQNYFEKLEKLSAAEE) are region H. The tract at residues 398 to 770 (KDPYANLMLQ…TKLQLVQGIR (373 aa)) is involved in nuclear speckle localization. Positions 449–770 (IQGDGPKKER…TKLQLVQGIR (322 aa)) are region C.

Belongs to the PAT1 family. In terms of assembly, interacts (via region A) with DDX6/RCK. Interacts (via region H and region C) with LSM1 and LSM4. Interacts (via region N) with DCP1A, DCP2, EDC3, EDC4 and XRN1. Interacts with the CCR4-NOT complex. Interacts with the Lsm-containing SMN-Sm protein complex. Interacts with EIF4ENIF1/4E-T.

The protein resides in the cytoplasm. It is found in the P-body. The protein localises to the nucleus. Its subcellular location is the PML body. It localises to the nucleus speckle. Its function is as follows. RNA-binding protein involved in deadenylation-dependent decapping of mRNAs, leading to the degradation of mRNAs. Acts as a scaffold protein that connects deadenylation and decapping machinery. Required for cytoplasmic mRNA processing body (P-body) assembly. In Mus musculus (Mouse), this protein is Protein PAT1 homolog 1 (Patl1).